We begin with the raw amino-acid sequence, 441 residues long: Putative collagenous domain-containing protein R238 (441 aa).

One can recognise a Collagen-like domain in the interval 164–199; it reads GCKGEKGIKGELGPKGNTGQKGDIGSKGDRGDKGEP. The segment at 171–198 is disordered; sequence IKGELGPKGNTGQKGDIGSKGDRGDKGE. Residues 187 to 198 are compositionally biased toward basic and acidic residues; sequence IGSKGDRGDKGE.

This chain is Putative collagenous domain-containing protein R238, found in Acanthamoeba polyphaga (Amoeba).